The sequence spans 380 residues: Cytochrome b (380 aa).

4 helical membrane passes run 34–54 (FGSL…LLAM), 78–99 (WLIR…YMHI), 114–134 (WNTG…GYVL), and 179–199 (FFAL…IHLT). H84 and H98 together coordinate heme b. Residues H183 and H197 each coordinate heme b. Residue H202 coordinates a ubiquinone. A run of 4 helical transmembrane segments spans residues 227–247 (LKDI…ALFS), 289–309 (LGGV…PFLH), 321–341 (LSQS…WIGS), and 348–368 (FIII…ILFP).

It belongs to the cytochrome b family. The cytochrome bc1 complex contains 11 subunits: 3 respiratory subunits (MT-CYB, CYC1 and UQCRFS1), 2 core proteins (UQCRC1 and UQCRC2) and 6 low-molecular weight proteins (UQCRH/QCR6, UQCRB/QCR7, UQCRQ/QCR8, UQCR10/QCR9, UQCR11/QCR10 and a cleavage product of UQCRFS1). This cytochrome bc1 complex then forms a dimer. Heme b serves as cofactor.

The protein resides in the mitochondrion inner membrane. Its function is as follows. Component of the ubiquinol-cytochrome c reductase complex (complex III or cytochrome b-c1 complex) that is part of the mitochondrial respiratory chain. The b-c1 complex mediates electron transfer from ubiquinol to cytochrome c. Contributes to the generation of a proton gradient across the mitochondrial membrane that is then used for ATP synthesis. The protein is Cytochrome b (MT-CYB) of Oceanodroma tristrami (Tristram's storm-petrel).